A 400-amino-acid polypeptide reads, in one-letter code: Subtilisin-like protease CPC735_013700 (400 aa).

A signal peptide spans 1–19 (MGFVKILSLSLAATAVADA). Positions 20–116 (ATILSPRYPN…IEPNQIVTIS (97 aa)) are excised as a propeptide. The 80-residue stretch at 36 to 115 (YIVVMKDGVS…FIEPNQIVTI (80 aa)) folds into the Inhibitor I9 domain. Residues 126-400 (SWGLPRISVK…RKLLYNNSGK (275 aa)) enclose the Peptidase S8 domain. Residues Asp161 and His192 each act as charge relay system in the active site. The N-linked (GlcNAc...) asparagine glycan is linked to Asn252. The active-site Charge relay system is Ser346. N-linked (GlcNAc...) asparagine glycosylation is present at Asn396.

This sequence belongs to the peptidase S8 family.

It localises to the secreted. Its function is as follows. Secreted subtilisin-like serine protease with keratinolytic activity that contributes to pathogenicity. The polypeptide is Subtilisin-like protease CPC735_013700 (Coccidioides posadasii (strain C735) (Valley fever fungus)).